Reading from the N-terminus, the 331-residue chain is 4-hydroxythreonine-4-phosphate dehydrogenase (331 aa).

The substrate site is built by H137 and T138. Residues H167, H212, and H267 each contribute to the a divalent metal cation site. Residues K275, N284, and R293 each contribute to the substrate site.

Belongs to the PdxA family. As to quaternary structure, homodimer. It depends on Zn(2+) as a cofactor. Requires Mg(2+) as cofactor. Co(2+) serves as cofactor.

The protein resides in the cytoplasm. The catalysed reaction is 4-(phosphooxy)-L-threonine + NAD(+) = 3-amino-2-oxopropyl phosphate + CO2 + NADH. It functions in the pathway cofactor biosynthesis; pyridoxine 5'-phosphate biosynthesis; pyridoxine 5'-phosphate from D-erythrose 4-phosphate: step 4/5. Functionally, catalyzes the NAD(P)-dependent oxidation of 4-(phosphooxy)-L-threonine (HTP) into 2-amino-3-oxo-4-(phosphooxy)butyric acid which spontaneously decarboxylates to form 3-amino-2-oxopropyl phosphate (AHAP). This chain is 4-hydroxythreonine-4-phosphate dehydrogenase, found in Yersinia pseudotuberculosis serotype I (strain IP32953).